Here is a 257-residue protein sequence, read N- to C-terminus: Cytoplasmic envelopment protein 1 (257 aa).

Belongs to the herpesviridae cytoplasmic envelopment protein 1 family.

It is found in the virion. Its subcellular location is the virion tegument. It localises to the host cytoplasm. The protein resides in the host Golgi apparatus. Functionally, plays a critical role in cytoplasmic virus egress. Participates in the final step of tegumentation and envelope acquisition within the host cytoplasm. In Connochaetes taurinus (Blue wildebeest), this protein is Cytoplasmic envelopment protein 1 (42).